We begin with the raw amino-acid sequence, 430 residues long: Glutamate-1-semialdehyde 2,1-aminomutase (430 aa).

Residue Lys-267 is modified to N6-(pyridoxal phosphate)lysine.

The protein belongs to the class-III pyridoxal-phosphate-dependent aminotransferase family. HemL subfamily. Homodimer. Requires pyridoxal 5'-phosphate as cofactor.

It is found in the cytoplasm. The enzyme catalyses (S)-4-amino-5-oxopentanoate = 5-aminolevulinate. Its pathway is porphyrin-containing compound metabolism; protoporphyrin-IX biosynthesis; 5-aminolevulinate from L-glutamyl-tRNA(Glu): step 2/2. The sequence is that of Glutamate-1-semialdehyde 2,1-aminomutase from Sulfurovum sp. (strain NBC37-1).